Consider the following 768-residue polypeptide: Vacuolar basic amino acid transporter 4 (768 aa).

At 1-252 the chain is on the cytoplasmic side; it reads MGKKDRQRKK…HDLTRRRIFS (252 aa). Positions 9-40 form a coiled coil; sequence KKLREFAKLKNRQRNLRKSVQTLKNEVQREAK. The disordered stretch occupies residues 34–172; the sequence is EVQREAKVPR…ELPVSSSNSF (139 aa). Phosphoserine occurs at positions 62, 99, and 106. Basic and acidic residues predominate over residues 110 to 121; that stretch reads KPADKANEDDLK. Residues 132–159 are compositionally biased toward polar residues; that stretch reads SALQSSITDFSDRSVSPLQSITSCNTPM. A phosphoserine mark is found at Ser160 and Ser192. A helical transmembrane segment spans residues 253–273; that stretch reads SCMCTYLFFIAMDSSIILVIA. Topologically, residues 274-282 are vacuolar; the sequence is SKIASEFHE. The helical transmembrane segment at 283 to 305 threads the bilayer; sequence LWRLSLVISAYLLSNAIGQLVFL. Residues 306–311 are Cytoplasmic-facing; sequence KLSLIS. A helical membrane pass occupies residues 312–331; that stretch reads SVKLLLCIAQFSFILGGYLS. Residues 332 to 334 are Vacuolar-facing; sequence WSS. The chain crosses the membrane as a helical span at residues 335–357; sequence AHFWTFIFARCVTGFGGGSLIAL. Residues 358 to 375 are Cytoplasmic-facing; that stretch reads KSTIMNRFSQKNDSRYSL. The helical transmembrane segment at 376-396 threads the bilayer; that stretch reads SASMITFAMGVVIGPFMMNLF. Residues 397–406 are Vacuolar-facing; sequence DSSHGSGWRN. Residues 407–427 form a helical membrane-spanning segment; the sequence is AFLIPVPFCLVNASIMLADMY. The Cytoplasmic segment spans residues 428-447; it reads SVKSTLYGRPTPTLWKRFKN. Residues 448–468 form a helical membrane-spanning segment; sequence TLLSPDLYEILTLTLFLLCFV. The Vacuolar portion of the chain corresponds to 469 to 481; that stretch reads QVTSLDLTGLKNN. N-linked (GlcNAc...) asparagine glycosylation occurs at Asn480. A helical membrane pass occupies residues 482 to 502; that stretch reads TMIQALLFSVIIVCGILFFLI. Residues 503–522 are Cytoplasmic-facing; sequence ETSDTYMNSVISMSLQGDKR. The chain crosses the membrane as a helical span at residues 523–543; sequence LIWTMIGISFCFAALMCIIPF. Residues 544-562 lie on the Vacuolar side of the membrane; sequence GTTYFIIVLNLSTLQLAER. N-linked (GlcNAc...) asparagine glycosylation is present at Asn553. A helical transmembrane segment spans residues 563–583; sequence LSPFFFSIVLGYFSVSYFWKS. Residues 584–587 are Cytoplasmic-facing; the sequence is KGQN. Residues 588–608 form a helical membrane-spanning segment; that stretch reads FLLKFVLSGATLLLYVALMGV. The Vacuolar segment spans residues 609 to 617; sequence SLNLPVWKQ. The helical transmembrane segment at 618-638 threads the bilayer; that stretch reads YICLSLPFLGSSMILTLLSNL. Over 639–653 the chain is Cytoplasmic; that stretch reads YHEYHEQRKSPISGS. The chain crosses the membrane as a helical span at residues 654 to 674; the sequence is IVYCFGAVGGTVGISLGGYVF. At 675–734 the chain is on the vacuolar side; that stretch reads HKTLIKLMHEKVMPFSKQGYLKKDLLKIIKHATESSDWVHESAPKFVFQTLIECYLQACR. The helical transmembrane segment at 735-755 threads the bilayer; sequence NVFKLSTLFFTITVVAIFIFN. Residues 756 to 768 lie on the Cytoplasmic side of the membrane; that stretch reads RIHCRSQNCLSLS.

The protein belongs to the major facilitator superfamily.

The protein resides in the vacuole membrane. Functionally, transporter required for vacuolar uptake of basic amino acids. The sequence is that of Vacuolar basic amino acid transporter 4 (VBA4) from Saccharomyces cerevisiae (strain ATCC 204508 / S288c) (Baker's yeast).